The primary structure comprises 195 residues: Thymidylate kinase (195 aa).

ATP is bound at residue 7 to 14 (GIDGSGKT).

This sequence belongs to the thymidylate kinase family.

The catalysed reaction is dTMP + ATP = dTDP + ADP. Its function is as follows. Phosphorylation of dTMP to form dTDP in both de novo and salvage pathways of dTTP synthesis. In Aquifex aeolicus (strain VF5), this protein is Thymidylate kinase (tmk).